Consider the following 191-residue polypeptide: Akirin-1 (191 aa).

The disordered stretch occupies residues 17–70 (LLSPGSPKRRRCAPLPGPTPGLRPPDAEPPPLQMQTPPASLQQPAPPGSERRLP). Phosphoserine is present on Ser22. Residues 23-28 (PKRRRC) carry the Nuclear localization signal motif. Residues 31–48 (LPGPTPGLRPPDAEPPPL) are compositionally biased toward pro residues. Polar residues predominate over residues 49 to 59 (QMQTPPASLQQ). Thr71 is modified (phosphothreonine). The SYVS motif motif lies at 188-191 (SYVS).

The protein belongs to the akirin family. In terms of tissue distribution, expressed in macrophages and satellite cells.

The protein localises to the nucleus. In terms of biological role, molecular adapter that acts as a bridge between proteins, and which is involved skeletal muscle development. Functions as a signal transducer for MSTN during skeletal muscle regeneration and myogenesis. May regulate chemotaxis of both macrophages and myoblasts by reorganising actin cytoskeleton, leading to more efficient lamellipodia formation via a PI3 kinase dependent pathway. In contrast to AKIRIN2, not involved in nuclear import of proteasomes. The protein is Akirin-1 of Mus musculus (Mouse).